We begin with the raw amino-acid sequence, 381 residues long: Homoserine O-succinyltransferase (381 aa).

The region spanning 45–360 (NAVLVCHALN…PHGHDAFLLD (316 aa)) is the AB hydrolase-1 domain. Ser-151 serves as the catalytic Nucleophile. Residue Arg-221 coordinates substrate. Residues Asp-321 and His-354 contribute to the active site. Substrate is bound at residue Asp-355.

It belongs to the AB hydrolase superfamily. MetX family. As to quaternary structure, homodimer.

The protein localises to the cytoplasm. It catalyses the reaction L-homoserine + succinyl-CoA = O-succinyl-L-homoserine + CoA. It participates in amino-acid biosynthesis; L-methionine biosynthesis via de novo pathway; O-succinyl-L-homoserine from L-homoserine: step 1/1. Transfers a succinyl group from succinyl-CoA to L-homoserine, forming succinyl-L-homoserine. The sequence is that of Homoserine O-succinyltransferase from Burkholderia cenocepacia (strain HI2424).